The following is a 498-amino-acid chain: UDP-N-acetylmuramoylalanine--D-glutamate ligase (498 aa).

An ATP-binding site is contributed by 119–125; it reads GTNGKST.

It belongs to the MurCDEF family.

Its subcellular location is the cytoplasm. The enzyme catalyses UDP-N-acetyl-alpha-D-muramoyl-L-alanine + D-glutamate + ATP = UDP-N-acetyl-alpha-D-muramoyl-L-alanyl-D-glutamate + ADP + phosphate + H(+). Its pathway is cell wall biogenesis; peptidoglycan biosynthesis. In terms of biological role, cell wall formation. Catalyzes the addition of glutamate to the nucleotide precursor UDP-N-acetylmuramoyl-L-alanine (UMA). This is UDP-N-acetylmuramoylalanine--D-glutamate ligase from Wolbachia sp. subsp. Brugia malayi (strain TRS).